An 88-amino-acid polypeptide reads, in one-letter code: Small ribosomal subunit protein uS15 (88 aa).

Belongs to the universal ribosomal protein uS15 family. As to quaternary structure, part of the 30S ribosomal subunit. Forms a bridge to the 50S subunit in the 70S ribosome, contacting the 23S rRNA.

Functionally, one of the primary rRNA binding proteins, it binds directly to 16S rRNA where it helps nucleate assembly of the platform of the 30S subunit by binding and bridging several RNA helices of the 16S rRNA. Its function is as follows. Forms an intersubunit bridge (bridge B4) with the 23S rRNA of the 50S subunit in the ribosome. The sequence is that of Small ribosomal subunit protein uS15 from Leptospira interrogans serogroup Icterohaemorrhagiae serovar copenhageni (strain Fiocruz L1-130).